The following is a 130-amino-acid chain: Large ribosomal subunit protein bL12 (130 aa).

The protein belongs to the bacterial ribosomal protein bL12 family. In terms of assembly, homodimer. Part of the ribosomal stalk of the 50S ribosomal subunit. Forms a multimeric L10(L12)X complex, where L10 forms an elongated spine to which 2 to 4 L12 dimers bind in a sequential fashion. Binds GTP-bound translation factors.

Its function is as follows. Forms part of the ribosomal stalk which helps the ribosome interact with GTP-bound translation factors. Is thus essential for accurate translation. The polypeptide is Large ribosomal subunit protein bL12 (Parafrankia sp. (strain EAN1pec)).